An 835-amino-acid chain; its full sequence is Pre-mRNA-processing protein 40C (835 aa).

A compositionally biased stretch (polar residues) spans 1–20; that stretch reads MEGENTTDPPYTTAASSGQS. Residues 1–22 are disordered; that stretch reads MEGENTTDPPYTTAASSGQSIF. 2 consecutive WW domains span residues 243-276 and 295-328; these read GNRL…KPPG and SLPG…IPAE. The disordered stretch occupies residues 397–459; it reads SGMPVSSTIT…DSGPSKEECS (63 aa). Positions 400 to 428 are enriched in polar residues; that stretch reads PVSSTITSEANSGKTTEVTPSGESGNSTG. 3 consecutive FF domains span residues 455–509, 519–577, and 590–643; these read KEEC…YVKT, RAAH…RVLS, and RAAA…YIAE. 2 disordered regions span residues 649–677 and 714–738; these read RGDD…RKER and TESK…PADK. FF domains follow at residues 691-748 and 750-815; these read RKEA…HVKS and YERC…YVED.

It belongs to the PRPF40 family. In terms of assembly, interacts (via the WW domains) with the phosphorylated C-terminal domain of NRPB1 (via CTD domain). Expressed in roots, shoots, rosette leaves, cauline leaves, stems and flowers.

Its subcellular location is the nucleus. Its function is as follows. Binds the phosphorylated C-terminal domain (CTD) of the largest subunit of RNA polymerase II and functions as a scaffold for RNA processing machineries. May be involved in pre-mRNA splicing. The chain is Pre-mRNA-processing protein 40C from Arabidopsis thaliana (Mouse-ear cress).